The following is a 282-amino-acid chain: MSVRLSLPAPAKLNLFLHILGRRDDGYHELQTLFQFLDHGDELHFEARQDGQVRLHTEIAGVPHDSNLIVRAARGLQEASGSPQGVDIWLDKRLPMGGGIGGGSSDAATTLLALNHLWQLGWDEDRIAALGLRLGADVPVFTRGRAAFAEGVGEKLTPVDIPEPWYLVVVPQVLVSTAEIFSDPLLTRDSPAIKVRTVLEGDSRNDCQPVVERRYPEVRNALILLNKFVSARLTGTGGCVFGSFPNKAEADKVSALLPDHLQRFVAKGSNVSMLHRKLETLV.

The active site involves lysine 12. 95-105 (PMGGGIGGGSS) contributes to the ATP binding site. Aspartate 137 is an active-site residue.

The protein belongs to the GHMP kinase family. IspE subfamily.

The catalysed reaction is 4-CDP-2-C-methyl-D-erythritol + ATP = 4-CDP-2-C-methyl-D-erythritol 2-phosphate + ADP + H(+). It participates in isoprenoid biosynthesis; isopentenyl diphosphate biosynthesis via DXP pathway; isopentenyl diphosphate from 1-deoxy-D-xylulose 5-phosphate: step 3/6. Catalyzes the phosphorylation of the position 2 hydroxy group of 4-diphosphocytidyl-2C-methyl-D-erythritol. This Pseudomonas aeruginosa (strain LESB58) protein is 4-diphosphocytidyl-2-C-methyl-D-erythritol kinase.